The following is a 70-amino-acid chain: ATP synthase subunit c (70 aa).

The next 2 membrane-spanning stretches (helical) occupy residues 4–24 (IAAA…NGLI) and 45–65 (LMFI…VIAF).

This sequence belongs to the ATPase C chain family. In terms of assembly, F-type ATPases have 2 components, F(1) - the catalytic core - and F(0) - the membrane proton channel. F(1) has five subunits: alpha(3), beta(3), gamma(1), delta(1), epsilon(1). F(0) has three main subunits: a(1), b(2) and c(10-14). The alpha and beta chains form an alternating ring which encloses part of the gamma chain. F(1) is attached to F(0) by a central stalk formed by the gamma and epsilon chains, while a peripheral stalk is formed by the delta and b chains.

The protein localises to the cell membrane. Its function is as follows. F(1)F(0) ATP synthase produces ATP from ADP in the presence of a proton or sodium gradient. F-type ATPases consist of two structural domains, F(1) containing the extramembraneous catalytic core and F(0) containing the membrane proton channel, linked together by a central stalk and a peripheral stalk. During catalysis, ATP synthesis in the catalytic domain of F(1) is coupled via a rotary mechanism of the central stalk subunits to proton translocation. The polypeptide is ATP synthase subunit c (Bacillus pumilus (strain SAFR-032)).